A 399-amino-acid chain; its full sequence is Sphingosine-1-phosphate phosphatase 2 (399 aa).

A run of 4 helical transmembrane segments spans residues 88 to 108 (YLFQ…FLPF), 121 to 141 (LIII…VLKW), 160 to 180 (YGMP…LLIS), and 185 to 205 (YQYP…LVCL). The phosphatase sequence motif I stretch occupies residues 136–144 (KDVLKWPRP). Positions 163–166 (PSTH) are phosphatase sequence motif II. His-166 serves as the catalytic Proton donor. Residues 206-217 (SRLYTGMHTVLD) form a phosphatase sequence motif III region. Residue His-213 is the Nucleophile of the active site. A run of 5 helical transmembrane segments spans residues 219 to 239 (LGGV…WTFI), 247 to 267 (PLFP…YPVS), 280 to 300 (ILAA…FQLV), 318 to 338 (TYML…ILLV), and 371 to 391 (VPYK…FVPM).

Belongs to the type 2 lipid phosphate phosphatase family. In terms of tissue distribution, expressed strongly in kidney and heart, followed by brain, colon, small intestine and lung. Not detected in skeletal muscle, thymus, spleen, liver, placenta, and peripheral blood leukocytes.

It localises to the endoplasmic reticulum membrane. The enzyme catalyses sphinganine 1-phosphate + H2O = sphinganine + phosphate. The catalysed reaction is sphing-4-enine 1-phosphate + H2O = sphing-4-enine + phosphate. It catalyses the reaction (4R)-hydroxysphinganine 1-phosphate + H2O = (4R)-hydroxysphinganine + phosphate. Has specific phosphohydrolase activity towards sphingoid base 1-phosphates. Has high phosphohydrolase activity against dihydrosphingosine-1-phosphate and sphingosine-1-phosphate (S1P) in vitro. Sphingosine-1-phosphate phosphatase activity is needed for efficient recycling of sphingosine into the sphingolipid synthesis pathway. May play a role in attenuating intracellular sphingosine 1-phosphate (S1P) signaling. May play a role in pro-inflammatory signaling. Plays a role in the regulation of pancreatic islet beta-cell endoplasmic reticulum stress and proliferation. This chain is Sphingosine-1-phosphate phosphatase 2, found in Homo sapiens (Human).